The chain runs to 607 residues: Elongation factor 4 (607 aa).

The region spanning 11–193 (EKIRNFSIIA…QIVEKVPAPT (183 aa)) is the tr-type G domain. Residues 23–28 (DHGKST) and 140–143 (NKID) each bind GTP.

This sequence belongs to the TRAFAC class translation factor GTPase superfamily. Classic translation factor GTPase family. LepA subfamily.

Its subcellular location is the cell membrane. The catalysed reaction is GTP + H2O = GDP + phosphate + H(+). Functionally, required for accurate and efficient protein synthesis under certain stress conditions. May act as a fidelity factor of the translation reaction, by catalyzing a one-codon backward translocation of tRNAs on improperly translocated ribosomes. Back-translocation proceeds from a post-translocation (POST) complex to a pre-translocation (PRE) complex, thus giving elongation factor G a second chance to translocate the tRNAs correctly. Binds to ribosomes in a GTP-dependent manner. In Streptococcus gordonii (strain Challis / ATCC 35105 / BCRC 15272 / CH1 / DL1 / V288), this protein is Elongation factor 4.